The sequence spans 262 residues: Ubiquitin thioesterase otubain-like (262 aa).

The OTU domain maps to Lys64 to Asn262. Asp72 is a catalytic residue. Residue Cys75 is the Nucleophile of the active site. Position 168 (Ile168) interacts with substrate. His255 is a catalytic residue.

Belongs to the peptidase C65 family.

The catalysed reaction is Thiol-dependent hydrolysis of ester, thioester, amide, peptide and isopeptide bonds formed by the C-terminal Gly of ubiquitin (a 76-residue protein attached to proteins as an intracellular targeting signal).. Possible hydrolase that can remove conjugated ubiquitin from proteins in vitro and may therefore play an important regulatory role at the level of protein turnover by preventing degradation. The protein is Ubiquitin thioesterase otubain-like of Drosophila melanogaster (Fruit fly).